The following is a 170-amino-acid chain: Large ribosomal subunit protein uL18c (170 aa).

A chloroplast-targeting transit peptide spans 1–63 (MLASPALAGA…QADRIARHVR (63 aa)).

It belongs to the universal ribosomal protein uL18 family. Part of the 50S ribosomal subunit; contacts the 5S rRNA.

It is found in the plastid. The protein localises to the chloroplast. Its function is as follows. Binds 5S rRNA, forms part of the central protuberance of the 50S subunit. This Oryza sativa subsp. japonica (Rice) protein is Large ribosomal subunit protein uL18c (RPL18).